The primary structure comprises 234 residues: Probable chemoreceptor glutamine deamidase CheD 1 (234 aa).

It belongs to the CheD family.

The catalysed reaction is L-glutaminyl-[protein] + H2O = L-glutamyl-[protein] + NH4(+). Its function is as follows. Probably deamidates glutamine residues to glutamate on methyl-accepting chemotaxis receptors (MCPs), playing an important role in chemotaxis. In Albidiferax ferrireducens (strain ATCC BAA-621 / DSM 15236 / T118) (Rhodoferax ferrireducens), this protein is Probable chemoreceptor glutamine deamidase CheD 1.